A 182-amino-acid chain; its full sequence is MFTTIKKTVIGLFTIVRSMWMVNSHAIRPRDTILYPEVPVPVPPRFRGRIILSRDPDGDERCVACNLCAVACPVGCISLQKAEREDGRWYPEFFRINFSRCIFCGLCEEACPTTAIQMTPDFEMSEYVRQDLVYEKEHLLISGPGKYPDYNYYRVTGMAVADKPKGAAQNEAAPIDLRSLLP.

2 consecutive 4Fe-4S ferredoxin-type domains span residues 50–82 (IILS…LQKA) and 92–121 (EFFR…MTPD). Residues cysteine 62, cysteine 65, cysteine 68, cysteine 72, cysteine 101, cysteine 104, cysteine 107, and cysteine 111 each coordinate [4Fe-4S] cluster.

This sequence belongs to the complex I 23 kDa subunit family. As to quaternary structure, NDH-1 is composed of 14 different subunits. Subunits NuoA, H, J, K, L, M, N constitute the membrane sector of the complex. It depends on [4Fe-4S] cluster as a cofactor.

The protein resides in the cell inner membrane. It catalyses the reaction a quinone + NADH + 5 H(+)(in) = a quinol + NAD(+) + 4 H(+)(out). NDH-1 shuttles electrons from NADH, via FMN and iron-sulfur (Fe-S) centers, to quinones in the respiratory chain. The immediate electron acceptor for the enzyme in this species is believed to be ubiquinone. Couples the redox reaction to proton translocation (for every two electrons transferred, four hydrogen ions are translocated across the cytoplasmic membrane), and thus conserves the redox energy in a proton gradient. This chain is NADH-quinone oxidoreductase subunit I, found in Psychrobacter arcticus (strain DSM 17307 / VKM B-2377 / 273-4).